Consider the following 183-residue polypeptide: Bifunctional protein PyrR (183 aa).

The PRPP-binding signature appears at 102-114 (VVLVDDVLFSGRT).

Belongs to the purine/pyrimidine phosphoribosyltransferase family. PyrR subfamily.

The enzyme catalyses UMP + diphosphate = 5-phospho-alpha-D-ribose 1-diphosphate + uracil. Regulates the transcription of the pyrimidine nucleotide (pyr) operon in response to exogenous pyrimidines. Functionally, also displays a weak uracil phosphoribosyltransferase activity which is not physiologically significant. In Leifsonia xyli subsp. xyli (strain CTCB07), this protein is Bifunctional protein PyrR.